The sequence spans 189 residues: Probable transcriptional regulator Rv1176c (189 aa).

It belongs to the PadR family. As to quaternary structure, homodimer.

The protein resides in the cytoplasm. Probable transcriptional regulator that may help mitigate the effect of oxidative stress and help mycobacteria survive inside macrophages. Binds to its own promoter region. The protein is Probable transcriptional regulator Rv1176c of Mycobacterium tuberculosis (strain ATCC 25618 / H37Rv).